The primary structure comprises 317 residues: N-acetylmuramoyl-L-alanine amidase XlyB (317 aa).

The signal sequence occupies residues 1 to 39 (MSIPVKKNLVSEAKYALKCPNAMSAEYITIHNTANDASA). The N-acetylmuramoyl-L-alanine amidase domain maps to 40–142 (ANEISYMIGN…QDWSGKYCPH (103 aa)). A LysM domain is found at 177–221 (SEYHVKKGDTLSGIAASHGASVKTLQSINHITDPNHIKIGQVIKL).

It belongs to the N-acetylmuramoyl-L-alanine amidase 2 family.

Its subcellular location is the secreted. The enzyme catalyses Hydrolyzes the link between N-acetylmuramoyl residues and L-amino acid residues in certain cell-wall glycopeptides.. Functionally, autolysins are involved in some important biological processes such as cell separation, cell-wall turnover, competence for genetic transformation, formation of the flagella and sporulation. This is N-acetylmuramoyl-L-alanine amidase XlyB (xlyB) from Bacillus subtilis (strain 168).